A 184-amino-acid polypeptide reads, in one-letter code: FMRFamide-like neuropeptides 3 (184 aa).

Residues 1–23 form the signal peptide; that stretch reads MISPNHLILLFCVNCAFLVASDA. The propeptide occupies 24–25; it reads TP. Residue phenylalanine 35 is modified to Phenylalanine amide. Positions 39–73 are excised as a propeptide; sequence AIADEMTFEEDGYYPSNVMWKRSTVDSSEPVIRDQ. Residues phenylalanine 82, phenylalanine 95, phenylalanine 111, and phenylalanine 126 each carry the phenylalanine amide modification. Positions 90-110 are disordered; the sequence is FGTMRFGKRNPENDTPFGTMR. A propeptide spanning residues 130 to 142 is cleaved from the precursor; sequence EDGNAPFGTMKFG. The interval 150–184 is disordered; it reads LGTMRFGKRSADDSAPFGTMRFGKRNPLGTMRFGK. Phenylalanine amide is present on residues phenylalanine 155, phenylalanine 171, and phenylalanine 182.

The protein belongs to the FARP (FMRFamide related peptide) family. Each flp gene is expressed in a distinct set of neurons. Flp-3 is expressed in the IL1 and PQR neurons.

The protein resides in the secreted. In terms of biological role, FMRFamides and FMRFamide-like peptides are neuropeptides. SAEPFGTMRF-amide inhibits the activity of dissected pharyngeal myogenic muscle system. The polypeptide is FMRFamide-like neuropeptides 3 (Caenorhabditis elegans).